The sequence spans 252 residues: Ribonuclease HII (252 aa).

One can recognise an RNase H type-2 domain in the interval 41–232 (LLVAGVDEAG…VRLALEGREQ (192 aa)). The a divalent metal cation site is built by Asp-47, Glu-48, and Asp-140.

The protein belongs to the RNase HII family. Mn(2+) serves as cofactor. Mg(2+) is required as a cofactor.

Its subcellular location is the cytoplasm. It catalyses the reaction Endonucleolytic cleavage to 5'-phosphomonoester.. Functionally, endonuclease that specifically degrades the RNA of RNA-DNA hybrids. The chain is Ribonuclease HII from Xanthomonas oryzae pv. oryzae (strain KACC10331 / KXO85).